The sequence spans 400 residues: Lysophospholipid transporter LplT (400 aa).

A run of 12 helical transmembrane segments spans residues 19–39, 53–73, 91–111, 139–159, 164–184, 195–213, 227–247, 257–277, 281–301, 304–324, 352–372, and 373–393; these read VIVA…ATLA, VLQM…GQMA, AGAA…LVGI, LMEA…GVLA, IAAL…NLFI, SWRL…VVLW, LFWG…PVAL, YLNA…AKLV, TVSR…IFSL, ALLP…FFVV, NSAM…GVPA, and VAIG…LWIW.

This sequence belongs to the major facilitator superfamily. LplT (TC 2.A.1.42) family.

Its subcellular location is the cell inner membrane. Functionally, catalyzes the facilitated diffusion of 2-acyl-glycero-3-phosphoethanolamine (2-acyl-GPE) into the cell. The chain is Lysophospholipid transporter LplT from Salmonella enteritidis PT4 (strain P125109).